Here is a 390-residue protein sequence, read N- to C-terminus: Chorismate synthase (390 aa).

The NADP(+) site is built by R39 and R45. FMN is bound by residues 132 to 134 (RSS), 253 to 254 (NA), G298, 313 to 317 (KPIPT), and R339.

Belongs to the chorismate synthase family. Homotetramer. FMNH2 serves as cofactor.

It carries out the reaction 5-O-(1-carboxyvinyl)-3-phosphoshikimate = chorismate + phosphate. Its pathway is metabolic intermediate biosynthesis; chorismate biosynthesis; chorismate from D-erythrose 4-phosphate and phosphoenolpyruvate: step 7/7. Its function is as follows. Catalyzes the anti-1,4-elimination of the C-3 phosphate and the C-6 proR hydrogen from 5-enolpyruvylshikimate-3-phosphate (EPSP) to yield chorismate, which is the branch point compound that serves as the starting substrate for the three terminal pathways of aromatic amino acid biosynthesis. This reaction introduces a second double bond into the aromatic ring system. This chain is Chorismate synthase, found in Bacillus velezensis (strain DSM 23117 / BGSC 10A6 / LMG 26770 / FZB42) (Bacillus amyloliquefaciens subsp. plantarum).